The primary structure comprises 287 residues: Bifunctional protein FolD (287 aa).

NADP(+) contacts are provided by residues Gly160–Ser162, Ser189, and Thr230.

It belongs to the tetrahydrofolate dehydrogenase/cyclohydrolase family. Homodimer.

It carries out the reaction (6R)-5,10-methylene-5,6,7,8-tetrahydrofolate + NADP(+) = (6R)-5,10-methenyltetrahydrofolate + NADPH. It catalyses the reaction (6R)-5,10-methenyltetrahydrofolate + H2O = (6R)-10-formyltetrahydrofolate + H(+). It participates in one-carbon metabolism; tetrahydrofolate interconversion. Functionally, catalyzes the oxidation of 5,10-methylenetetrahydrofolate to 5,10-methenyltetrahydrofolate and then the hydrolysis of 5,10-methenyltetrahydrofolate to 10-formyltetrahydrofolate. The chain is Bifunctional protein FolD from Chlamydia caviae (strain ATCC VR-813 / DSM 19441 / 03DC25 / GPIC) (Chlamydophila caviae).